Reading from the N-terminus, the 1109-residue chain is Coiled-coil domain-containing protein 158 (1109 aa).

Residues 1-12 (MESKACESKNED) show a composition bias toward basic and acidic residues. The interval 1 to 31 (MESKACESKNEDLLPSGITSKGGSSSPFFVT) is disordered. A compositionally biased stretch (polar residues) spans 17-31 (GITSKGGSSSPFFVT). Coiled coils occupy residues 71–166 (GKEH…MLKD) and 242–828 (VEDQ…QEQE). 2 disordered regions span residues 843–897 (LQGP…DPTR) and 952–1061 (HRSN…TGKT). Composition is skewed to polar residues over residues 862–882 (ASVT…SFLS), 953–970 (RSNN…SSET), and 988–998 (SCFTFTSTASP). A compositionally biased stretch (low complexity) spans 999 to 1019 (SGKMSASRSFSSSPKKSPVHS). 2 stretches are compositionally biased toward polar residues: residues 1020 to 1037 (LLTS…QYRS) and 1043 to 1061 (SPTS…TGKT). Residues 1053–1109 (PSLETTGKTCQKLQNRLESLQTLVEDLQLKNQAMSSMIRNQEKRIQKVKDQEKMLLK) are a coiled coil.

The chain is Coiled-coil domain-containing protein 158 (Ccdc158) from Mus musculus (Mouse).